The primary structure comprises 288 residues: Pantothenate synthetase (288 aa).

Position 30–37 (30–37 (MGALHEGH)) interacts with ATP. The active-site Proton donor is the H37. Q61 is a binding site for (R)-pantoate. Residue Q61 coordinates beta-alanine. Position 147–150 (147–150 (GEKD)) interacts with ATP. A (R)-pantoate-binding site is contributed by Q153. Residues V176 and 184–187 (ISSR) each bind ATP.

It belongs to the pantothenate synthetase family. In terms of assembly, homodimer.

Its subcellular location is the cytoplasm. The catalysed reaction is (R)-pantoate + beta-alanine + ATP = (R)-pantothenate + AMP + diphosphate + H(+). It participates in cofactor biosynthesis; (R)-pantothenate biosynthesis; (R)-pantothenate from (R)-pantoate and beta-alanine: step 1/1. Catalyzes the condensation of pantoate with beta-alanine in an ATP-dependent reaction via a pantoyl-adenylate intermediate. The sequence is that of Pantothenate synthetase from Chlorobium phaeobacteroides (strain BS1).